A 281-amino-acid chain; its full sequence is Non-selective voltage-gated ion channel 2 (281 aa).

Arg-11 and Arg-19 together coordinate ATP.

Belongs to the eukaryotic mitochondrial porin family.

It is found in the mitochondrion outer membrane. Its function is as follows. Non-selective voltage-gated ion channel that mediates the transport of anions and cations through the mitochondrion outer membrane. The channel adopts an open conformation at low or zero membrane potential and a closed conformation at potentials above 30-40 mV. The open state has a weak anion selectivity whereas the closed state is cation-selective. Does not confer permeability to NADH. Functionally, catalyzes the scrambling of phospholipids across the outer mitochondrial membrane; the mechanism is unrelated to channel activity and is capable of translocating both anionic and zwitterionic phospholipids. The polypeptide is Non-selective voltage-gated ion channel 2 (POR2) (Saccharomyces cerevisiae (strain ATCC 204508 / S288c) (Baker's yeast)).